The sequence spans 963 residues: VPS35 endosomal protein-sorting factor-like (963 aa).

The disordered stretch occupies residues 43 to 69 (SKTKKVNRKGSTSSTSSSSSSSVVDPL). Residues 53–69 (STSSTSSSSSSSVVDPL) show a composition bias toward low complexity. Ser265 carries the post-translational modification Phosphoserine. Residues 703-719 (ACVAYCFITIPSLAGIF) form a helical membrane-spanning segment.

Belongs to the VPS35L family. Component of the heterotrimeric retriever complex formed by VPS26C, VPS29 and VPS35L. Interacts with VPS29. Interacts with COMMD1, CCDC93 and CCDC22; associates with the CCC (COMMD/CCDC22/CCDC93) complex which contains at least COMMD1 (and possibly other COMM domain-containing proteins), CCDC22 and CCDC93. Interacts with WASHC1, WASHC2A and WASHC2C. Interacts with SNX17 and SNX31.

It is found in the membrane. Its subcellular location is the endosome. In terms of biological role, acts as a component of the retriever complex. The retriever complex is a heterotrimeric complex related to retromer cargo-selective complex (CSC) and essential for retromer-independent retrieval and recycling of numerous cargos such as integrin alpha-5/beta-1 (ITGA5:ITGB1). The recruitment of the retriever complex to the endosomal membrane involves CCC and WASH complexes. In the endosomes, drives the retrieval and recycling of NxxY-motif-containing cargo proteins by coupling to SNX17, a cargo essential for the homeostatic maintenance of numerous cell surface proteins associated with processes that include cell migration, cell adhesion, nutrient supply and cell signaling. Involved in copper-dependent ATP7A trafficking between the trans-Golgi network and vesicles in the cell periphery; the function is proposed to depend on its association with the CCC complex and cooperation with the WASH complex on early endosomes. Seems not to be required for CCC complex stability. Its function is as follows. (Microbial infection) The heterotrimeric retriever complex, in collaboration with the CCC complex, mediates the exit of human papillomavirus to the cell surface. The protein is VPS35 endosomal protein-sorting factor-like of Homo sapiens (Human).